A 243-amino-acid polypeptide reads, in one-letter code: 1-(5-phosphoribosyl)-5-[(5-phosphoribosylamino)methylideneamino] imidazole-4-carboxamide isomerase (243 aa).

The active-site Proton acceptor is aspartate 8. Catalysis depends on aspartate 130, which acts as the Proton donor.

It belongs to the HisA/HisF family.

The protein resides in the cytoplasm. It carries out the reaction 1-(5-phospho-beta-D-ribosyl)-5-[(5-phospho-beta-D-ribosylamino)methylideneamino]imidazole-4-carboxamide = 5-[(5-phospho-1-deoxy-D-ribulos-1-ylimino)methylamino]-1-(5-phospho-beta-D-ribosyl)imidazole-4-carboxamide. Its pathway is amino-acid biosynthesis; L-histidine biosynthesis; L-histidine from 5-phospho-alpha-D-ribose 1-diphosphate: step 4/9. The protein is 1-(5-phosphoribosyl)-5-[(5-phosphoribosylamino)methylideneamino] imidazole-4-carboxamide isomerase of Cellvibrio japonicus (strain Ueda107) (Pseudomonas fluorescens subsp. cellulosa).